A 505-amino-acid polypeptide reads, in one-letter code: ATP synthase subunit alpha, cyanelle (505 aa).

An ATP-binding site is contributed by 170–177 (GDRQTGKT).

It belongs to the ATPase alpha/beta chains family. F-type ATPases have 2 components, CF(1) - the catalytic core - and CF(0) - the membrane proton channel. CF(1) has five subunits: alpha(3), beta(3), gamma(1), delta(1), epsilon(1). CF(0) has four main subunits: a, b, b' and c.

The protein resides in the plastid. It is found in the cyanelle thylakoid membrane. It carries out the reaction ATP + H2O + 4 H(+)(in) = ADP + phosphate + 5 H(+)(out). Its function is as follows. Produces ATP from ADP in the presence of a proton gradient across the membrane. The alpha chain is a regulatory subunit. This is ATP synthase subunit alpha, cyanelle from Cyanophora paradoxa.